A 60-amino-acid chain; its full sequence is MNYFSVIMYLINSVIFTFMIFLTFVNPSLLNDQYWVYILIGFFTAIVFHSGYQAGKGSEK.

The next 2 helical transmembrane spans lie at 4–24 (FSVI…FLTF) and 35–55 (WVYI…YQAG).

It localises to the host membrane. This Sulfolobus islandicus filamentous virus (isolate Iceland/Hveragerdi) (SIFV) protein is Putative transmembrane protein 74 (SIFV0074).